The sequence spans 282 residues: Bis(5'-nucleosyl)-tetraphosphatase, symmetrical (282 aa).

This sequence belongs to the Ap4A hydrolase family.

It catalyses the reaction P(1),P(4)-bis(5'-adenosyl) tetraphosphate + H2O = 2 ADP + 2 H(+). In terms of biological role, hydrolyzes diadenosine 5',5'''-P1,P4-tetraphosphate to yield ADP. The chain is Bis(5'-nucleosyl)-tetraphosphatase, symmetrical from Burkholderia thailandensis (strain ATCC 700388 / DSM 13276 / CCUG 48851 / CIP 106301 / E264).